Here is a 338-residue protein sequence, read N- to C-terminus: Ferrochelatase (338 aa).

2 residues coordinate Fe cation: His189 and Glu293.

Belongs to the ferrochelatase family.

It is found in the cytoplasm. The enzyme catalyses heme b + 2 H(+) = protoporphyrin IX + Fe(2+). It participates in porphyrin-containing compound metabolism; protoheme biosynthesis; protoheme from protoporphyrin-IX: step 1/1. Catalyzes the ferrous insertion into protoporphyrin IX. This is Ferrochelatase from Azotobacter vinelandii (strain DJ / ATCC BAA-1303).